The primary structure comprises 557 residues: Isocitrate lyase (557 aa).

Thr-53 is subject to Phosphothreonine. 106–108 lines the substrate pocket; sequence SGW. A Mg(2+)-binding site is contributed by Asp-179. Cys-217 serves as the catalytic Proton acceptor. Substrate-binding positions include 218 to 219, Arg-254, 437 to 441, and Thr-471; these read GH and NLSPS.

The protein belongs to the isocitrate lyase/PEP mutase superfamily. Isocitrate lyase family. Homotetramer. The cofactor is Mg(2+). Post-translationally, phosphorylated in response to elevated glucose levels, leading first to reversible inactivation of the enzyme (short-term inactivation), and at a later stage to proteolytic degradation of the protein (long-term inactivation).

Its subcellular location is the cytoplasm. The protein resides in the secreted. It is found in the extracellular space. The protein localises to the extracellular matrix. It localises to the vacuole. It carries out the reaction D-threo-isocitrate = glyoxylate + succinate. The enzyme catalyses (2S,3R)-3-hydroxybutane-1,2,3-tricarboxylate = pyruvate + succinate. Its pathway is carbohydrate metabolism; glyoxylate cycle; (S)-malate from isocitrate: step 1/2. Its activity is regulated as follows. Phosphorylated and inactivated after addition of glucose to the cell culture (repressing conditions). Catalyzes the formation of succinate and glyoxylate from isocitrate, a key step of the glyoxylate cycle, which operates as an anaplerotic route for replenishing the tricarboxylic acid cycle. Required for growth on ethanol or acetate, but dispensable when fermentable carbon sources are available. Also acts on 2-methylisocitrate. The chain is Isocitrate lyase from Saccharomyces cerevisiae (strain ATCC 204508 / S288c) (Baker's yeast).